A 198-amino-acid chain; its full sequence is Probable GTP-binding protein EngB (198 aa).

Residues 27–198 (DLPEVALAGR…ESWDTILSEL (172 aa)) form the EngB-type G domain. GTP-binding positions include 35–42 (GRSNVGKS), 62–66 (GKTQL), 80–83 (DVPG), 147–150 (TKAD), and 179–181 (FSS). The Mg(2+) site is built by Ser-42 and Thr-64.

The protein belongs to the TRAFAC class TrmE-Era-EngA-EngB-Septin-like GTPase superfamily. EngB GTPase family. Mg(2+) serves as cofactor.

Necessary for normal cell division and for the maintenance of normal septation. The polypeptide is Probable GTP-binding protein EngB (Streptococcus agalactiae serotype III (strain NEM316)).